Consider the following 126-residue polypeptide: UPF0047 protein AF_2050 (126 aa).

The protein belongs to the UPF0047 family.

The sequence is that of UPF0047 protein AF_2050 from Archaeoglobus fulgidus (strain ATCC 49558 / DSM 4304 / JCM 9628 / NBRC 100126 / VC-16).